A 514-amino-acid polypeptide reads, in one-letter code: MRCSDLLLLFLLALCVLPGISCRNQEEKLLQDLMTNYNRHLRPALRGDQVIDVTLKLTLTNLISLNEREETLTTNVWIEMQWSDYRLRWDPDKYDDIQQLRVPSAMVWLPDIVLENNIDGTFEITLYTNVLVYPDGSIYWLPPAIYRSSCSIHVTYFPFDWQNCTMVFQSQTYSANEINLLLTVEEGQTIEWIFIDPEAFTENGEWAIKHRPARKIINSGRFTPDDIQYQQVIFYLIIQRKPLFYIINIIVPCVLISSMAVLVYFLPAKAGGQKCTVSINVLLAQTVFLFLIAQKVPETSQAVPLIGKYLTFLMVVTVVIVVNAVIVLNVSLRTPNTHSMSQRVRQVWLHLLPRYLGMHMPEEAPGPPQATRRRSSLGLMVKADEYMLWKARTELLFEKQKERDGLMKTVLEKIGRGLESNCAQDFCQSLEEASPEIRACVEACNHIANATREQNDFSSENEEWILVGRVIDRVCFFIMASLFVCGTIGIFLMAHFNQAPALPFPGDPKTYLPP.

Residues 1-22 (MRCSDLLLLFLLALCVLPGISC) form the signal peptide. The Extracellular portion of the chain corresponds to 23-241 (RNQEEKLLQD…VIFYLIIQRK (219 aa)). An intrachain disulfide couples Cys150 to Cys164. Residue Asn163 is glycosylated (N-linked (GlcNAc...) asparagine). A run of 3 helical transmembrane segments spans residues 242–266 (PLFYIINIIVPCVLISSMAVLVYFL), 275–293 (CTVSINVLLAQTVFLFLIA), and 309–330 (YLTFLMVVTVVIVVNAVIVLNV). The Cytoplasmic segment spans residues 331–473 (SLRTPNTHSM…WILVGRVIDR (143 aa)). Tyr386 bears the Phosphotyrosine; by Tyr-kinases mark. The helical transmembrane segment at 474–494 (VCFFIMASLFVCGTIGIFLMA) threads the bilayer.

It belongs to the ligand-gated ion channel (TC 1.A.9) family. Acetylcholine receptor (TC 1.A.9.1) subfamily. Gamma/CHRNG sub-subfamily. Pentamer of two alpha chains, and one each of the beta, delta, and gamma chains.

The protein resides in the postsynaptic cell membrane. Its subcellular location is the cell membrane. The enzyme catalyses K(+)(in) = K(+)(out). It carries out the reaction Na(+)(in) = Na(+)(out). Its function is as follows. After binding acetylcholine, the AChR responds by an extensive change in conformation that affects all subunits and leads to opening of an ion-conducting channel across the plasma membrane. The chain is Acetylcholine receptor subunit gamma (CHRNG) from Gallus gallus (Chicken).